The chain runs to 229 residues: Large ribosomal subunit protein uL1 (229 aa).

Belongs to the universal ribosomal protein uL1 family. In terms of assembly, part of the 50S ribosomal subunit.

In terms of biological role, binds directly to 23S rRNA. The L1 stalk is quite mobile in the ribosome, and is involved in E site tRNA release. Protein L1 is also a translational repressor protein, it controls the translation of the L11 operon by binding to its mRNA. The sequence is that of Large ribosomal subunit protein uL1 from Phenylobacterium zucineum (strain HLK1).